The following is a 193-amino-acid chain: Protein SINE3 (193 aa).

The disordered stretch occupies residues 15–35 (SELGAKRLKDPEMKNRKVTTE). A compositionally biased stretch (basic and acidic residues) spans 18–35 (GAKRLKDPEMKNRKVTTE). One can recognise a KASH domain in the interval 155–193 (VTVKFRIVLLSFILWAILAAIVVFFSSGEERAYRGPLPT). Residues 161 to 181 (IVLLSFILWAILAAIVVFFSS) form a helical membrane-spanning segment. Residues 190–193 (PLPT) carry the Required for nuclear localization motif.

As to quaternary structure, interacts with SUN1 and SUN2.

It localises to the nucleus membrane. The polypeptide is Protein SINE3 (Arabidopsis thaliana (Mouse-ear cress)).